The primary structure comprises 627 residues: MEDRQTRLFLALILSMGIWMGVNYFFFPNTSTKKNTETKQTQSDKTSENTKQQITSGKTKESNSADPVVQKEKITPFDTKKSFIVTDSYIVEFSSLGGKISKFYMKDFTGPNGELIQVARKNPETVVVDGKSYQAVELSRDKGFDFNFSDSLVEISDSPWNYIQFSLTEDKINHSISFSAVSPDRSYQLKKEFRFYPSENYFKLSISIINFSKEKLSFASQKNVRYLRTFGSLGPYPKDRPLSDRDTANFFRFYYLGGSFQDTLDGSSSVGFWSSVGNFFTGNSGTDESFSIKTDKESGVDFAGTGSRYFIAVADPLDHKPHGIVLDNRPKNESGAVLVYDNILLNPGENYNLDFASYIGIRESEGMAFKNPEFDPSQSKNSPFVGLSSDLNKSFNQGITTPFRNGIIWILKQIYRFTIPNYGWSIIIFAILFKLVFYPLNQKQADSMKKMQELSPQLKTINEKFANDPKMRQQKTMELYKKNNVNPVGGCLPMVIQIPIFIALYTAFSDTIDLWNSPFLWVKDLSEPDVIWTSPAIPYFTQTGIGLNLLALLMVGTQVFQTRMTSVSMDPNQKMLMYVMPVMMLYIFWNMPSGVTLYWTFQNVLSIGQQWITNHLKKTEEKKKAKV.

Residues 8-28 traverse the membrane as a helical segment; that stretch reads LFLALILSMGIWMGVNYFFFP. Polar residues predominate over residues 33 to 57; that stretch reads KKNTETKQTQSDKTSENTKQQITSG. The tract at residues 33–68 is disordered; it reads KKNTETKQTQSDKTSENTKQQITSGKTKESNSADPV. Over residues 58-68 the composition is skewed to basic and acidic residues; the sequence is KTKESNSADPV. A run of 4 helical transmembrane segments spans residues 417 to 437, 488 to 508, 536 to 556, and 575 to 595; these read FTIP…KLVF, VGGC…YTAF, AIPY…LMVG, and MLMY…PSGV.

It belongs to the OXA1/ALB3/YidC family. Type 1 subfamily. Interacts with the Sec translocase complex via SecD. Specifically interacts with transmembrane segments of nascent integral membrane proteins during membrane integration.

It is found in the cell inner membrane. Required for the insertion and/or proper folding and/or complex formation of integral membrane proteins into the membrane. Involved in integration of membrane proteins that insert both dependently and independently of the Sec translocase complex, as well as at least some lipoproteins. Aids folding of multispanning membrane proteins. The chain is Membrane protein insertase YidC from Leptospira interrogans serogroup Icterohaemorrhagiae serovar copenhageni (strain Fiocruz L1-130).